We begin with the raw amino-acid sequence, 31 residues long: Nemertide alpha-5 (31 aa).

3 disulfide bridges follow: Cys2–Cys16, Cys9–Cys20, and Cys15–Cys26. Residues Pro28 and Pro29 each carry the 4-hydroxyproline modification.

The protein belongs to the nemertide family. As to expression, confined to the epidermis and to the mucus layer.

The protein localises to the secreted. Highly potent toxin against both insect and some mammalian sodium channels (Nav). It potently inhibits inactivation of insect sodium channels of B.germanica (BgNav1) (EC(50)=7.8 nM) and also delays the inactivation of mammalian Nav with potent activity on Nav1.3/SCN3A and Nav1.4/SCN4A (hNav1.1/SCN1A; EC(50)=102.1 nM, rNav1.2/SCN2A; EC(50)=156.1 nM, rNav1.3/SCN3A; EC(50)=9.4 nM, rNav1.4/SCN4A; EC(50)=15.4 nM, hNav1.5/SCN5A; EC(50)=132.7 nM, mNav1.6/SCN8A; EC(50)=66.9 nM, hNav1.9/SCN9A; EC(50)=73 nM). 1 uM is enough to completely inhibits the inactivation, resulting in sustained non-inactivating currents. In addition, the toxin significantly enhances the recovery from inactivation, and the open state is not required for the toxin to interact with the channel. In vivo, injection into brine shrimp (Artemia salina) stops movement or causes death after 24 hours (EC(50)=0.4 uM). This Ramphogordius pseudolacteus (Ribbon worm) protein is Nemertide alpha-5.